The primary structure comprises 644 residues: MIDAACNYLNPYAQQHQAQQQQHAQHQQHAQQQQHHLHMQQAQHHLHLSHQQAQQQHMQHLTQQQQQQQQQQQQQQQQQQQQQQPQQQQHDFLSAAALLSAPPSLSGSSSGSSSGSSPLYGKPPMKLELPYPQASSTGTASPNSSIQSAPSSASVSPSIFPSPAQSFASISASPSTPTTTLAPPTTAAAGALAGSPTSSSPSSSAASAAAAAAAAAAAAADLGAAAVASAAYGWNTAYSGLGPARSQFPYAQYASDYYGNAVGMSSSAAWFSHQERLYQPWSSQSYPGFNFDDIAFQTQLQRRSVRCTCPNCTNEMSGLPPIVGPDERGRKQHICHIPGCERLYGKASHLKTHLRWHTGERPFLCLTCGKRFSRSDELQRHGRTHTNYRPYACPICSKKFSRSDHLSKHKKTHFKDKKSKKVLAAEAKEQAAAAIKLEKKEKKSGKPLTPPVEFKQEQPDTTPLVNYAPYANLYQHSTSAGSSVNPPPPPPPLFQQQMTTTTSSAAASFVEQPWSSSSSRAIQPATTSASSSSSSSASSPAAAVVSAIGSASSPAASATALAQHHYAALAMQSESQLAAEYGLTMSGLASGASQDSSSSCHMKSEYAASYPADFGAGTASYGYPHPHPHHHNAWAAAYHPHATA.

2 disordered regions span residues 16-65 (HQAQ…TQQQ) and 101-196 (APPS…AGSP). Low complexity-rich tracts occupy residues 101-119 (APPS…SSPL) and 140-196 (ASPN…AGSP). 3 consecutive C2H2-type zinc fingers follow at residues 333–357 (HICH…LRWH), 363–385 (FLCL…GRTH), and 391–413 (YACP…KKTH). Disordered stretches follow at residues 437-461 (LEKK…QPDT) and 478-537 (TSAG…SSSA). Low complexity-rich tracts occupy residues 499-508 (TTTTSSAAAS) and 521-537 (AIQP…SSSA).

It localises to the nucleus. Its function is as follows. Required for the development of the antennal, intercalary and mandibular segments of the head. The chain is Transcription factor btd (btd) from Drosophila melanogaster (Fruit fly).